A 94-amino-acid polypeptide reads, in one-letter code: Small ribosomal subunit protein uS19 (94 aa).

The protein belongs to the universal ribosomal protein uS19 family.

Functionally, protein S19 forms a complex with S13 that binds strongly to the 16S ribosomal RNA. The chain is Small ribosomal subunit protein uS19 from Clostridium botulinum (strain Langeland / NCTC 10281 / Type F).